A 54-amino-acid chain; its full sequence is Large ribosomal subunit protein bL33 (54 aa).

Belongs to the bacterial ribosomal protein bL33 family.

In Opitutus terrae (strain DSM 11246 / JCM 15787 / PB90-1), this protein is Large ribosomal subunit protein bL33.